We begin with the raw amino-acid sequence, 289 residues long: 4-diphosphocytidyl-2-C-methyl-D-erythritol kinase (289 aa).

Residue Lys10 is part of the active site. 94-104 (PVAAGLAGGSS) lines the ATP pocket. Asp136 is a catalytic residue.

It belongs to the GHMP kinase family. IspE subfamily.

It carries out the reaction 4-CDP-2-C-methyl-D-erythritol + ATP = 4-CDP-2-C-methyl-D-erythritol 2-phosphate + ADP + H(+). It functions in the pathway isoprenoid biosynthesis; isopentenyl diphosphate biosynthesis via DXP pathway; isopentenyl diphosphate from 1-deoxy-D-xylulose 5-phosphate: step 3/6. In terms of biological role, catalyzes the phosphorylation of the position 2 hydroxy group of 4-diphosphocytidyl-2C-methyl-D-erythritol. The chain is 4-diphosphocytidyl-2-C-methyl-D-erythritol kinase from Bacillus cytotoxicus (strain DSM 22905 / CIP 110041 / 391-98 / NVH 391-98).